The sequence spans 521 residues: Cytochrome b5 reductase 4 (521 aa).

Met-1 carries the N-acetylmethionine modification. Polar residues predominate over residues 1–18 (MLNVPSQSFPAPRSQQRV). Residues 1–27 (MLNVPSQSFPAPRSQQRVASGGRSKVP) form a disordered region. The region spanning 54 to 130 (LIEVTEEELK…LKECLVGRMA (77 aa)) is the Cytochrome b5 heme-binding domain. The heme site is built by His-89 and His-112. One can recognise a CS domain in the interval 165 to 256 (PSYPSYDWFQ…KENTSWDFLG (92 aa)). The FAD-binding FR-type domain maps to 273-385 (LYYRKCQLIS…SSPEGNFKIS (113 aa)). FAD contacts are provided by residues 365-380 (DRLQ…SPEG) and 392-424 (DLFL…KVKL).

Belongs to the flavoprotein pyridine nucleotide cytochrome reductase family. The cofactor is FAD. As to expression, widely expressed.

It is found in the endoplasmic reticulum. The enzyme catalyses 2 Fe(III)-[cytochrome b5] + NADH = 2 Fe(II)-[cytochrome b5] + NAD(+) + H(+). NADH-cytochrome b5 reductase involved in endoplasmic reticulum stress response pathway. Plays a critical role in protecting pancreatic beta-cells against oxidant stress, possibly by protecting the cell from excess buildup of reactive oxygen species (ROS). Reduces a variety of substrates in vitro, such as cytochrome c, feericyanide and methemoglobin. The polypeptide is Cytochrome b5 reductase 4 (Homo sapiens (Human)).